The chain runs to 465 residues: Ribosomal protein uS12 methylthiotransferase RimO (465 aa).

The MTTase N-terminal domain maps to M1–P117. Positions 10, 46, 80, 150, 154, and 157 each coordinate [4Fe-4S] cluster. A Radical SAM core domain is found at A136–R369. In terms of domain architecture, TRAM spans R371–A442.

The protein belongs to the methylthiotransferase family. RimO subfamily. The cofactor is [4Fe-4S] cluster.

The protein resides in the cytoplasm. It catalyses the reaction L-aspartate(89)-[ribosomal protein uS12]-hydrogen + (sulfur carrier)-SH + AH2 + 2 S-adenosyl-L-methionine = 3-methylsulfanyl-L-aspartate(89)-[ribosomal protein uS12]-hydrogen + (sulfur carrier)-H + 5'-deoxyadenosine + L-methionine + A + S-adenosyl-L-homocysteine + 2 H(+). Its function is as follows. Catalyzes the methylthiolation of an aspartic acid residue of ribosomal protein uS12. The chain is Ribosomal protein uS12 methylthiotransferase RimO from Solibacter usitatus (strain Ellin6076).